A 580-amino-acid chain; its full sequence is MKIFFRYQTFRFIWLTKPPGRRLHKDHQLWTPLTLADFEAINRCNRPLPKNFNFAADVLDQWSQKEKTGERPANPALWWVNGKGDEVKWSFRELGSLSRKAANVLTKPCGLQRGDRLAVILPRIPEWWLVNVACIRTGIIFMPGTIQLTAKDILYRLRASKAKCIVASEEVAPAVESIVLECPDLKTKLLVSPQSWNGWLSFQELFQFASEEHSCVETGSQEPMTIYFTSGTTGFPKMAQHSQSSLGIGFTLCGRYWLDLKSSDIIWNMSDTGWVKAAIGSVFSSWLCGACVFVHRMAQFDTDTFLDTLTTYPITTLCSPPTVYRMLVQKDLKRYKFKSLRHCLTGGEPLNPEVLEQWRVQTGLELYEGYGQTEVGMICANQKGQEIKPGSMGKGMLPYDVQIIDENGNVLPPGKEGEIALRLKPTRPFCFFSKYVDNPQKTAATIRGDFYVTGDRGVMDSDGYFWFVGRADDVIISSGYRIGPFEVESALIEHPAVVESAVVSSPDQIRGEVVKAFVVLAAPFKSYNPEKLTLELQDHVKKSTAPYKYPRKVEFVQELPKTITGKIKRNVLRDQEWRGR.

Residues 1–22 (MKIFFRYQTFRFIWLTKPPGRR) constitute a mitochondrion transit peptide. Residues 229 to 237 (TSGTTGFPK), 368 to 373 (EGYGQT), Asp-455, Arg-470, and Lys-566 contribute to the ATP site.

This sequence belongs to the ATP-dependent AMP-binding enzyme family. It depends on Mg(2+) as a cofactor. Requires Mn(2+) as cofactor.

The protein resides in the mitochondrion. It catalyses the reaction a medium-chain fatty acid + ATP + CoA = a medium-chain fatty acyl-CoA + AMP + diphosphate. The catalysed reaction is hexanoate + ATP + CoA = hexanoyl-CoA + AMP + diphosphate. It carries out the reaction octanoate + ATP + CoA = octanoyl-CoA + AMP + diphosphate. The enzyme catalyses decanoate + ATP + CoA = decanoyl-CoA + AMP + diphosphate. It catalyses the reaction dodecanoate + ATP + CoA = dodecanoyl-CoA + AMP + diphosphate. In terms of biological role, catalyzes the activation of fatty acids by CoA to produce an acyl-CoA, the first step in fatty acid metabolism. Capable of activating medium-chain fatty acids with a preference for C6-12 fatty acids. This chain is Acyl-coenzyme A synthetase ACSM4, mitochondrial (ACSM4), found in Homo sapiens (Human).